We begin with the raw amino-acid sequence, 182 residues long: N-alpha-acetyltransferase daf-31 (182 aa).

Positions 1–152 constitute an N-acetyltransferase domain; that stretch reads MNIRCARVDD…DAYAMRRDLA (152 aa). Positions 162-182 are disordered; that stretch reads PADREAYTTAKTTDDKKKNRS.

The protein belongs to the acetyltransferase family. ARD1 subfamily. As to quaternary structure, component of the N-terminal acetyltransferase A (NatA) complex. Expressed in head and tail hypodermal cells, hypodermal seam cells, pharynx, intestine and head and tail neurons.

It catalyses the reaction N-terminal glycyl-[protein] + acetyl-CoA = N-terminal N(alpha)-acetylglycyl-[protein] + CoA + H(+). The enzyme catalyses N-terminal L-alanyl-[protein] + acetyl-CoA = N-terminal N(alpha)-acetyl-L-alanyl-[protein] + CoA + H(+). The catalysed reaction is N-terminal L-seryl-[protein] + acetyl-CoA = N-terminal N(alpha)-acetyl-L-seryl-[protein] + CoA + H(+). It carries out the reaction N-terminal L-valyl-[protein] + acetyl-CoA = N-terminal N(alpha)-acetyl-L-valyl-[protein] + CoA + H(+). It catalyses the reaction N-terminal L-cysteinyl-[protein] + acetyl-CoA = N-terminal N(alpha)-acetyl-L-cysteinyl-[protein] + CoA + H(+). The enzyme catalyses N-terminal L-threonyl-[protein] + acetyl-CoA = N-terminal N(alpha)-acetyl-L-threonyl-[protein] + CoA + H(+). Its function is as follows. Catalytic subunit of the N-terminal acetyltransferase A (NatA) complex which displays alpha (N-terminal) acetyltransferase activity. Plays a role in regulating larval development, metabolism and longevity. Functions downstream or alongside daf-3, daf-12 and daf-16 in the dauer formation pathway. Functions upstream of daf-15 to enable animal development. This is N-alpha-acetyltransferase daf-31 from Caenorhabditis elegans.